Reading from the N-terminus, the 313-residue chain is Hydroxyacylglutathione hydrolase, mitochondrial (313 aa).

Residues histidine 107, histidine 109, aspartate 111, histidine 112, histidine 163, and aspartate 187 each coordinate Zn(2+). Substrate contacts are provided by residues 196 to 198 and 226 to 228; these read KFF and HEY. Residue histidine 226 participates in Zn(2+) binding. Basic and acidic residues-rich tracts occupy residues 285 to 294 and 301 to 313; these read VQEHAGERDP and IRKE…VPKD. Positions 285-313 are disordered; it reads VQEHAGERDPISTMGAIRKEKDHFKVPKD. 302–305 contacts substrate; sequence RKEK.

This sequence belongs to the metallo-beta-lactamase superfamily. Glyoxalase II family. Monomer. Zn(2+) is required as a cofactor.

The protein resides in the mitochondrion matrix. It localises to the cytoplasm. The enzyme catalyses an S-(2-hydroxyacyl)glutathione + H2O = a 2-hydroxy carboxylate + glutathione + H(+). It carries out the reaction (R)-S-lactoylglutathione + H2O = (R)-lactate + glutathione + H(+). Functionally, thiolesterase that catalyzes the hydrolysis of S-D-lactoyl-glutathione to form glutathione and D-lactic acid. The chain is Hydroxyacylglutathione hydrolase, mitochondrial (hagh) from Xenopus tropicalis (Western clawed frog).